The following is a 215-amino-acid chain: LysM and putative peptidoglycan-binding domain-containing protein 1 (215 aa).

A LysM domain is found at 37 to 81 (LEHQVQPGDTLQGLALRYGVSMEQIKRANRLYTNDSIFLKKSLYI). Polar residues-rich tracts occupy residues 86–103 (GQSDLSDDQNSQEGSETE) and 173–189 (GNRTPSRQNSPQTQQRS). Disordered stretches follow at residues 86–133 (GQSD…PVDF) and 148–203 (AVKK…TRAS).

The polypeptide is LysM and putative peptidoglycan-binding domain-containing protein 1 (lysmd1) (Xenopus laevis (African clawed frog)).